The sequence spans 45 residues: Osteocalcin (45 aa).

In terms of domain architecture, Gla spans 1-41 (AAGELTLTQLESLREVCEANLACEDMMDAQGIIAAYTAYYG). Positions 11, 15, 18, and 24 each coordinate Ca(2+). 4-carboxyglutamate occurs at positions 11, 15, and 18. Residues cysteine 17 and cysteine 23 are joined by a disulfide bond.

The protein belongs to the osteocalcin/matrix Gla protein family. Post-translationally, gamma-carboxyglutamate residues are formed by vitamin K dependent carboxylation by GGCX. These residues are essential for the binding of calcium. As to expression, also found in smaller quantities in dentin.

Its subcellular location is the secreted. Its function is as follows. The carboxylated form is one of the main organic components of the bone matrix, which constitutes 1-2% of the total bone protein. The carboxylated form binds strongly to apatite and calcium. In Lepomis macrochirus (Bluegill), this protein is Osteocalcin (bglap).